We begin with the raw amino-acid sequence, 394 residues long: Acetyl-CoA acetyltransferase (394 aa).

Cysteine 88 (acyl-thioester intermediate) is an active-site residue. Residues histidine 349 and cysteine 379 each act as proton acceptor in the active site.

The protein belongs to the thiolase-like superfamily. Thiolase family.

It localises to the cytoplasm. The catalysed reaction is 2 acetyl-CoA = acetoacetyl-CoA + CoA. It functions in the pathway metabolic intermediate biosynthesis; (R)-mevalonate biosynthesis; (R)-mevalonate from acetyl-CoA: step 1/3. This chain is Acetyl-CoA acetyltransferase (atoB), found in Escherichia coli (strain K12).